A 160-amino-acid chain; its full sequence is ATP synthase subunit b (160 aa).

The helical transmembrane segment at 12–32 threads the bilayer; sequence ISFVLFVWFCMKYVWYPFISI.

Belongs to the ATPase B chain family. In terms of assembly, F-type ATPases have 2 components, F(1) - the catalytic core - and F(0) - the membrane proton channel. F(1) has five subunits: alpha(3), beta(3), gamma(1), delta(1), epsilon(1). F(0) has three main subunits: a(1), b(2) and c(10-14). The alpha and beta chains form an alternating ring which encloses part of the gamma chain. F(1) is attached to F(0) by a central stalk formed by the gamma and epsilon chains, while a peripheral stalk is formed by the delta and b chains.

The protein localises to the cell inner membrane. In terms of biological role, f(1)F(0) ATP synthase produces ATP from ADP in the presence of a proton or sodium gradient. F-type ATPases consist of two structural domains, F(1) containing the extramembraneous catalytic core and F(0) containing the membrane proton channel, linked together by a central stalk and a peripheral stalk. During catalysis, ATP synthesis in the catalytic domain of F(1) is coupled via a rotary mechanism of the central stalk subunits to proton translocation. Component of the F(0) channel, it forms part of the peripheral stalk, linking F(1) to F(0). The polypeptide is ATP synthase subunit b (Blochmanniella pennsylvanica (strain BPEN)).